The primary structure comprises 427 residues: Enolase (427 aa).

Residue glutamine 162 coordinates (2R)-2-phosphoglycerate. Catalysis depends on glutamate 204, which acts as the Proton donor. Residues aspartate 241, glutamate 282, and aspartate 309 each coordinate Mg(2+). Residues lysine 334, arginine 363, serine 364, and lysine 385 each coordinate (2R)-2-phosphoglycerate. The active-site Proton acceptor is lysine 334.

Belongs to the enolase family. Requires Mg(2+) as cofactor.

It localises to the cytoplasm. The protein localises to the secreted. Its subcellular location is the cell surface. It carries out the reaction (2R)-2-phosphoglycerate = phosphoenolpyruvate + H2O. Its pathway is carbohydrate degradation; glycolysis; pyruvate from D-glyceraldehyde 3-phosphate: step 4/5. In terms of biological role, catalyzes the reversible conversion of 2-phosphoglycerate (2-PG) into phosphoenolpyruvate (PEP). It is essential for the degradation of carbohydrates via glycolysis. The sequence is that of Enolase from Parafrankia sp. (strain EAN1pec).